The chain runs to 1070 residues: Duffy receptor gamma form (1070 aa).

An N-terminal signal peptide occupies residues 1-21 (MEGKKKRPLFFLLVLLLSHKA). Topologically, residues 22–1003 (NNVLFERMNG…SYECFTKGSS (982 aa)) are extracellular. N-linked (GlcNAc...) asparagine glycans are attached at residues N134 and N179. 2 cysteine pairs are disulfide-bonded: C214–C243 and C227–C234. The short motif at 279 to 281 (RGD) is the Cell attachment site element. 4 disulfides stabilise this stretch: C296–C372, C410–C427, C422–C502, and C431–C500. Residues 518 to 912 (VGSGVESKAP…LNNRKLNRDQ (395 aa)) form a disordered region. The span at 526–541 (APSSNPINEAVKSSSG) shows a compositional bias: polar residues. 3 stretches are compositionally biased toward basic and acidic residues: residues 544-559 (KVQE…EGEG), 672-707 (GEVH…DDRS), and 714-731 (HTDE…KDTE). A glycan (N-linked (GlcNAc...) asparagine) is linked at N676. Over residues 732-763 (TTGGSTLTPEQNVSVASDNGNVPGSGNKQNEG) the composition is skewed to polar residues. N743 carries N-linked (GlcNAc...) asparagine glycosylation. A compositionally biased stretch (low complexity) spans 766-776 (ALSGAESLESS). A glycan (N-linked (GlcNAc...) asparagine) is linked at N785. Basic and acidic residues predominate over residues 796 to 807 (GNEKDFQKHDFM). A compositionally biased stretch (low complexity) spans 814–863 (DQTSSDHTSSDQTSSDQTSSDQTSSDQTSSDQTSSDQTSSDQTSSDQTID). Over residues 864 to 888 (TEGHHRDNVRNPEIKSSEDMSKGDF) the composition is skewed to basic and acidic residues. Over residues 890–906 (RNSNSNELYSHNNLNNR) the composition is skewed to polar residues. A glycan (N-linked (GlcNAc...) asparagine) is linked at N936. A helical transmembrane segment spans residues 1004 to 1025 (TGIVYFATGGAFLIILLLFASW). The Cytoplasmic segment spans residues 1026–1070 (NAASNDYEEEATFDEFEEYCYNIHRTPQMPNDIEHMQQFTPLDYS).

It is found in the membrane. Its function is as follows. Binds to Neu5Gc-sialylated receptors on macaque erythrocytes. This is Duffy receptor gamma form from Plasmodium knowlesi.